The following is a 759-amino-acid chain: Pseudocleavage protein nop-1 (759 aa).

Disordered stretches follow at residues 1–46, 334–361, 379–413, 440–495, and 732–759; these read MSAP…SSIF, KIFP…MDKK, LSVN…NLSQ, QSSR…KKER, and ESDG…GAKI. Over residues 10–42 the composition is skewed to basic and acidic residues; it reads DIHSDDRDHADHQTKKEKHWFEEKSEQNGENRR. Positions 448–465 are enriched in low complexity; the sequence is TGNSSISSGVGSIASGTS. The segment covering 473 to 482 has biased composition (polar residues); that stretch reads GSRSGQSISR. The segment covering 485–495 has biased composition (basic and acidic residues); sequence SRRDDEGKKER. Residues 736 to 759 are compositionally biased toward polar residues; it reads PASSNDDFDTQSTASTSTVFGAKI.

The protein resides in the nucleus. Its subcellular location is the cytoplasm. The protein localises to the cell cortex. It localises to the cleavage furrow. In terms of biological role, required for formation of the pseudocleavage furrow during the first cleavage of the embryo and also mediates aster-induced furrowing during cytokinesis. Promotes cortical recruitment of ani-1 and nmy-2 during pseudocleavage and cytokinesis and promotes the accumulation of actin at furrowing regions. Regulates establishment of embryonic cell polarity. This chain is Pseudocleavage protein nop-1 (nop-1), found in Caenorhabditis elegans.